Consider the following 542-residue polypeptide: Chaperonin GroEL 5 (542 aa).

Residues 30 to 33 (TLGP), lysine 51, 87 to 91 (DGTTT), glycine 415, and aspartate 496 each bind ATP.

It belongs to the chaperonin (HSP60) family. Forms a cylinder of 14 subunits composed of two heptameric rings stacked back-to-back. Interacts with the co-chaperonin GroES.

Its subcellular location is the cytoplasm. It catalyses the reaction ATP + H2O + a folded polypeptide = ADP + phosphate + an unfolded polypeptide.. In terms of biological role, together with its co-chaperonin GroES, plays an essential role in assisting protein folding. The GroEL-GroES system forms a nano-cage that allows encapsulation of the non-native substrate proteins and provides a physical environment optimized to promote and accelerate protein folding. In Rhizobium meliloti (strain 1021) (Ensifer meliloti), this protein is Chaperonin GroEL 5.